The chain runs to 884 residues: Valine--tRNA ligase (884 aa).

The short motif at 46–56 (PNVTGKLHLGH) is the 'HIGH' region element. Residues 520 to 524 (KMSKS) carry the 'KMSKS' region motif. An ATP-binding site is contributed by Lys523. The stretch at 809–844 (LADLLNVEEELARLEKELAKWQKELNMVGKKLSNER) forms a coiled coil.

It belongs to the class-I aminoacyl-tRNA synthetase family. ValS type 1 subfamily. As to quaternary structure, monomer.

The protein resides in the cytoplasm. The enzyme catalyses tRNA(Val) + L-valine + ATP = L-valyl-tRNA(Val) + AMP + diphosphate. In terms of biological role, catalyzes the attachment of valine to tRNA(Val). As ValRS can inadvertently accommodate and process structurally similar amino acids such as threonine, to avoid such errors, it has a 'posttransfer' editing activity that hydrolyzes mischarged Thr-tRNA(Val) in a tRNA-dependent manner. This is Valine--tRNA ligase from Streptococcus agalactiae serotype Ia (strain ATCC 27591 / A909 / CDC SS700).